A 387-amino-acid polypeptide reads, in one-letter code: DNA-damage-repair/toleration protein 111 (387 aa).

A disordered region spans residues 1–213 (MLGGLYGDLP…TSGLGVGAGG (213 aa)). Low complexity predominate over residues 19–29 (SGNSSSVWSSS). Residues 103–158 (DPARPNDYEEYKREKKRKATEAEMKREMDKRRQEDEERDKREREEREKERERDNSD) are compositionally biased toward basic and acidic residues. Positions 214–260 (QMTAAQRMMAKMGWKQGQGLGKSEQGITTPLMAKKTDRRAGVIVNAS) constitute a G-patch domain. Positions 283 to 369 (RVLLLRNMVG…RTVRATFYDE (87 aa)) constitute an RRM domain.

As to quaternary structure, component of the SWAP1-SFPS-RRC1 splicing factor complex which modulates pre-mRNA splicing to promote photomorphogenesis. Interacts with SWAP1 in a light-independent manner. Associates with the photoreceptor phytochrome B (phyB) in nuclear photobodies upon response to red light. Binds to the splicing factor 1 SF1, involved in 3' splicing site recognition. Expressed ubiquitously with highest levels in dry seeds and in cells surrounding the base of trichomes and guard cells.

It is found in the nucleus. It localises to the nucleus speckle. Functionally, as a member of the SWAP1-SFPS-RRC1 splicing factor complex, modulates photomorphogenesis by regulating the gene expression and pre-messenger RNA (mRNA) alternative splicing of a large number of genes, including those involved in plant responses to light signaling, probably by helping in the 3' splice site determination. Associates with and regulates EARLY FLOWERING 3 (ELF3) mRNA processing, a key component of the circadian clock also involved in photomorphogenesis. Required for light-regulated (red, far-red and blue lights) photomorphogenesis in a PHYB- and PHYTOCHROME INTERACTING FACTORS- (PIFs) dependent manner. Promotes flowering under both short (SD) and long days (LD). Controls abscisic acid (ABA) sensitivity during seed development, stomatal responsiveness and germination by monitoring ABI3 splicing, upstream of the splicing factor SUPPRESSOR OF ABI3-ABI5. Seems to be involved in the resistance to UV light and chemical DNA-damaging agents. This chain is DNA-damage-repair/toleration protein 111, found in Arabidopsis thaliana (Mouse-ear cress).